Reading from the N-terminus, the 868-residue chain is Facilitated trehalose transporter Tret1 (868 aa).

Disordered stretches follow at residues 1–213 (MSGR…QKAT) and 257–314 (KESS…LIHR). The Cytoplasmic portion of the chain corresponds to 1 to 403 (MSGRDNRGAG…VYRPTTNPIY (403 aa)). Over residues 25–43 (KLKEKLTRAGDDQGYHRVE) the composition is skewed to basic and acidic residues. 3 stretches are compositionally biased toward low complexity: residues 44–57 (SNLS…SLDT), 79–91 (PQQQ…QQLR), and 117–126 (PFQQQQQRTP). 2 stretches are compositionally biased toward basic and acidic residues: residues 146 to 155 (EIREHRDRQQ) and 257 to 290 (KESS…KLDK). Ser259, Ser260, Ser261, Ser331, and Ser333 each carry phosphoserine. Residues 335-367 (EDFHTSRQHFQQQRSISTDSRKSRRPYEMDEMG) are disordered. The segment covering 342-352 (QHFQQQRSIST) has biased composition (polar residues). Basic and acidic residues predominate over residues 353-367 (DSRKSRRPYEMDEMG). Residues 404 to 424 (IWTQVLAALSVSLGSLVVGFV) traverse the membrane as a helical segment. The Extracellular segment spans residues 425 to 451 (SAYTSPALVSMTNRNMTSFEVTPQAAS). Asn439 is a glycosylation site (N-linked (GlcNAc...) asparagine). A helical membrane pass occupies residues 452 to 472 (WVGGIMPLAGLAGGIAGGPFI). Residues 473–484 (EYLGRRNTILAT) are Cytoplasmic-facing. A helical transmembrane segment spans residues 485-505 (AIPFIVSSLLIACAVNVAMVL). At 506-508 (AGR) the chain is on the extracellular side. The helical transmembrane segment at 509 to 529 (FLAGFCVGIASLSLPVYLGET) threads the bilayer. Residues 530–535 (VQPEVR) are Cytoplasmic-facing. Residues 536 to 556 (GTLGLLPTAFGNIGILLCFVA) form a helical membrane-spanning segment. At 557 to 563 (GTYMDWS) the chain is on the extracellular side. Residues 564–584 (MLAFLGAALPVPFLILMFLIP) form a helical membrane-spanning segment. The Cytoplasmic portion of the chain corresponds to 585-653 (ETPRWFVSRG…NLKPLSISLG (69 aa)). Residues 654–674 (LMFFQQLSGINAVIFYTVSIF) traverse the membrane as a helical segment. Residues 675–684 (KDAGSTIDGN) lie on the Extracellular side of the membrane. Residues 685-705 (LCTIIVGIVNFMATFIATLLI) traverse the membrane as a helical segment. Residues 706 to 711 (DRAGRK) are Cytoplasmic-facing. Residues 712–732 (ILLYVSNIAMIITLFVLGGFF) form a helical membrane-spanning segment. Topologically, residues 733–751 (YCKSHGQDVSQLGWLPLSC) are extracellular. The helical transmembrane segment at 752 to 772 (FVIYILGFSLGFGPIPWLMMG) threads the bilayer. Topologically, residues 773 to 778 (EILPSK) are cytoplasmic. A helical transmembrane segment spans residues 779–799 (IRGSAASVATAFNWSCTFVVT). Residues 800 to 812 (KTFQDMIDFMGAH) are Extracellular-facing. A helical transmembrane segment spans residues 813–833 (GAFWLFGSICFIGLFFVILYV). The Cytoplasmic portion of the chain corresponds to 834–868 (PETQGKTLEDIERKMMGRVRRMSSVANMKPLAFNM). Phosphoserine is present on residues Ser856 and Ser857.

It belongs to the major facilitator superfamily. Sugar transporter (TC 2.A.1.1) family. Trehalose transporter subfamily.

It is found in the cell membrane. In terms of biological role, low-capacity facilitative transporter for trehalose. Does not transport maltose, sucrose or lactose. Mediates the bidirectional transfer of trehalose. Responsible for the transport of trehalose synthesized in the fat body and the incorporation of trehalose into other tissues that require a carbon source, thereby regulating trehalose levels in the hemolymph. The chain is Facilitated trehalose transporter Tret1 from Drosophila pseudoobscura pseudoobscura (Fruit fly).